A 967-amino-acid polypeptide reads, in one-letter code: uncharacterized protein (967 aa).

2 disordered regions span residues 1–23 and 41–72; these read MQNA…FHDR and FTMH…DPRT. The span at 14 to 23 shows a compositional bias: basic and acidic residues; sequence KGRDVNFHDR. Residues 60–72 show a composition bias toward polar residues; that stretch reads RLSNYSSAVDPRT. Position 86 is a phosphoserine (S86). 5 disordered regions span residues 135–259, 271–296, 380–399, 437–464, and 499–544; these read AVSE…QHLP, SVSR…SPPE, DSTT…APHK, HSYG…FVAD, and GTRF…KSLS. The span at 162-187 shows a compositional bias: polar residues; the sequence is ESSTSNNLETGNSTNTALHNVSSPLE. Positions 205-218 are enriched in basic and acidic residues; sequence HDLDEVISEKDTSL. Residues 221 to 234 are compositionally biased toward basic residues; that stretch reads RSSRGRSSAPKRRK. Over residues 278 to 294 the composition is skewed to low complexity; the sequence is SPASTPRSSVSSVSSSP. Residues 382–394 are compositionally biased toward polar residues; that stretch reads TTEYVNTESSSKT. Positions 499-508 are enriched in basic residues; that stretch reads GTRFHSRSSH. S585 carries the phosphoserine modification. Disordered stretches follow at residues 594–665 and 681–708; these read ESNE…SVND and DHRI…ESQH. Residues 608–622 are compositionally biased toward basic and acidic residues; that stretch reads YDSRESTGHTIKELR. Low complexity predominate over residues 686-704; that stretch reads ASDNQNNNNNDANALAENS. 728–736 is a substrate binding site; the sequence is PCVLDVKMG.

It belongs to the inositol phosphokinase (IPK) family.

The protein localises to the cytoplasm. This is an uncharacterized protein from Schizosaccharomyces pombe (strain 972 / ATCC 24843) (Fission yeast).